The chain runs to 485 residues: Glutamate--tRNA ligase (485 aa).

Residues Pro-12–Thr-22 carry the 'HIGH' region motif. Cys-109, Cys-111, Cys-136, and His-138 together coordinate Zn(2+). A 'KMSKS' region motif is present at residues Lys-253–Arg-257. Lys-256 lines the ATP pocket.

The protein belongs to the class-I aminoacyl-tRNA synthetase family. Glutamate--tRNA ligase type 1 subfamily. In terms of assembly, monomer. Zn(2+) is required as a cofactor.

It localises to the cytoplasm. It carries out the reaction tRNA(Glu) + L-glutamate + ATP = L-glutamyl-tRNA(Glu) + AMP + diphosphate. Catalyzes the attachment of glutamate to tRNA(Glu) in a two-step reaction: glutamate is first activated by ATP to form Glu-AMP and then transferred to the acceptor end of tRNA(Glu). This is Glutamate--tRNA ligase from Agrobacterium fabrum (strain C58 / ATCC 33970) (Agrobacterium tumefaciens (strain C58)).